Here is a 213-residue protein sequence, read N- to C-terminus: Superoxide dismutase [Mn] (213 aa).

Residues H27, H82, D168, and H172 each contribute to the Mn(2+) site.

Belongs to the iron/manganese superoxide dismutase family. In terms of assembly, homodimer.

The enzyme catalyses 2 superoxide + 2 H(+) = H2O2 + O2. With respect to regulation, inhibited by hydrogen peroxide. In terms of biological role, destroys superoxide anion radicals which are normally produced within the cells and which are toxic to biological systems. In Haemophilus ducreyi (strain 35000HP / ATCC 700724), this protein is Superoxide dismutase [Mn] (sodA).